Here is a 423-residue protein sequence, read N- to C-terminus: MVFSNNDEGRINKKLPKELLLRIFSFLDIVTLCRCAQISKAWNILALDGSNWQRIDLFNFQTDVEGRVVENISKRCGGFLRKLSLRGCIGVGDSSLKTFAQNCRNIEHLNLNGCTKITDSTCYSLSRFCSKLKHLDLTSCVSITNSSLKGISEGCRNLEYLNLSWCDQITKDGIEALVRGCRGLKALLLRGCTQLEDEALKHIQNYCHELVSLNLQSCSRITDEGVVQICRGCHRLQALCLSGCSNLTDASLTALGLNCPRLQILEAARCSHLTDAGFTLLARNCHELEKMDLEECILITDSTLIQLSIHCPKLQALSLSHCELITDDGILHLSNSTCGHERLRVLELDNCLLITDVALEHLENCRGLERLELYDCQQVTRAGIKRMRAQLPHVKVHAYFAPVTPPTAVTGSGQRLCRCCVIL.

The 47-residue stretch at 9–55 (GRINKKLPKELLLRIFSFLDIVTLCRCAQISKAWNILALDGSNWQRI) folds into the F-box domain. 13 LRR repeats span residues 61 to 87 (QTDV…SLRG), 88 to 113 (CIGV…NLNG), 114 to 139 (CTKI…DLTS), 140 to 165 (CVSI…NLSW), 166 to 191 (CDQI…LLRG), 192 to 217 (CTQL…NLQS), 218 to 243 (CSRI…CLSG), 244 to 269 (CSNL…EAAR), 270 to 295 (CSHL…DLEE), 296 to 321 (CILI…SLSH), 322 to 350 (CELI…ELDN), 351 to 375 (CLLI…ELYD), and 376 to 401 (CQQV…AYFA). The tract at residues 80–90 (LRKLSLRGCIG) is interaction with Calmodulin. Lys201 participates in a covalent cross-link: Glycyl lysine isopeptide (Lys-Gly) (interchain with G-Cter in ubiquitin). Thr404 carries the post-translational modification Phosphothreonine. Cys420 carries S-geranylgeranyl cysteine lipidation. Positions 420–423 (CVIL) match the CAAX motif motif.

Part of the SCF (SKP1-CUL1-F-box) E3 ubiquitin-protein ligase complex SCF(FBXL2) composed of CUL1, SKP1, RBX1 and FBXL2. Interacts with calmodulin; may antagonize substrate ubiquitination by SCF(FBXL2). May interact with PIK3R1. Interacts with PTPN13. In terms of processing, phosphorylated by GSK-beta (GSK3B), promoting recognition by FBXO3, leading to its ubiquitination by the SCF(FBXO3) complex. Post-translationally, ubiquitinated at Lys-201 by the SCF(FBXO3) complex in response to lipopolysaccharide (LPS), leading to its degradation by the proteasome.

Its subcellular location is the membrane. It functions in the pathway protein modification; protein ubiquitination. Its function is as follows. Calcium-activated substrate recognition component of the SCF (SKP1-cullin-F-box protein) E3 ubiquitin-protein ligase complex, SCF(FBXL2), which mediates the ubiquitination and subsequent proteasomal degradation of target proteins. Unlike many F-box proteins, FBXL2 does not seem to target phosphodegron within its substrates but rather calmodulin-binding motifs and is thereby antagonized by calmodulin. This is the case for the cyclins CCND2 and CCND3 which polyubiquitination and subsequent degradation are inhibited by calmodulin. Through CCND2 and CCND3 degradation induces cell-cycle arrest in G(0). SCF(FBXL2) also mediates PIK3R2 ubiquitination and proteasomal degradation thereby regulating phosphatidylinositol 3-kinase signaling and autophagy. PCYT1A monoubiquitination by SCF(FBXL2) and subsequent degradation regulates synthesis of phosphatidylcholine, which is utilized for formation of membranes and of pulmonary surfactant. The SCF(FBXL2) complex acts as a regulator of inflammation by mediating ubiquitination and degradation of TRAF proteins (TRAF1, TRAF2, TRAF3, TRAF4, TRAF5 and TRAF6). The SCF(FBXL2) complex acts as a negative regulator of the NLRP3 inflammasome by mediating ubiquitination and degradation of NLRP3. The sequence is that of F-box/LRR-repeat protein 2 from Pongo abelii (Sumatran orangutan).